The sequence spans 725 residues: Dynein axonemal assembly factor 1 (725 aa).

Residues 1 to 91 are disordered; that stretch reads MHPEPSEPAT…EDRGPRMTKS (91 aa). Residues 38 to 48 show a composition bias toward basic and acidic residues; the sequence is GCKEEINDPKE. Residues 53-67 show a composition bias toward polar residues; the sequence is SSDTSYHSQQKQSGD. Residues 76–86 are compositionally biased toward basic and acidic residues; the sequence is HPREDREDRGP. LRR repeat units lie at residues 107-129, 130-151, 152-173, 174-195, 196-217, and 221-242; these read ALND…EEYT, GLRC…EAQT, ELRC…EPLQ, KLDA…SCLP, VLNT…QHLQ, and RLCV…SILE. The LRRCT domain maps to 256–294; sequence PVIRQIPNYRRTVTVRLKHLTYLDDRPVFPKDRACAEAW. The segment covering 330–345 has biased composition (basic and acidic residues); sequence RAEERKRQRESQERGE. The interval 330-513 is disordered; the sequence is RAEERKRQRE…LGAAREEPTP (184 aa). At Ser358 the chain carries Phosphoserine. Composition is skewed to basic and acidic residues over residues 360–408 and 481–491; these read EGKE…REDG and VKGEDGDREPE. Thr559 bears the Phosphothreonine mark. Ser562 and Ser583 each carry phosphoserine. Over residues 632–642 the composition is skewed to basic and acidic residues; that stretch reads DLEIRKQDTKS. The disordered stretch occupies residues 632–703; it reads DLEIRKQDTK…AATPPETCVG (72 aa).

The protein belongs to the DNAAF1 family. As to expression, mainly expressed in trachea and testis.

The protein resides in the cell projection. It is found in the cilium. It localises to the cytoplasm. Its subcellular location is the cytoskeleton. The protein localises to the spindle pole. Functionally, cilium-specific protein required for the stability of the ciliary architecture. Plays a role in cytoplasmic preassembly of dynein arms. Involved in regulation of microtubule-based cilia and actin-based brush border microvilli. The chain is Dynein axonemal assembly factor 1 (DNAAF1) from Homo sapiens (Human).